The following is a 476-amino-acid chain: ATP synthase subunit beta (476 aa).

An ATP-binding site is contributed by 154–161 (GGAGVGKT).

Belongs to the ATPase alpha/beta chains family. In terms of assembly, F-type ATPases have 2 components, CF(1) - the catalytic core - and CF(0) - the membrane proton channel. CF(1) has five subunits: alpha(3), beta(3), gamma(1), delta(1), epsilon(1). CF(0) has four main subunits: a(1), b(1), b'(1) and c(9-12).

The protein resides in the cell inner membrane. The catalysed reaction is ATP + H2O + 4 H(+)(in) = ADP + phosphate + 5 H(+)(out). In terms of biological role, produces ATP from ADP in the presence of a proton gradient across the membrane. The catalytic sites are hosted primarily by the beta subunits. The protein is ATP synthase subunit beta of Rhodopseudomonas palustris (strain BisA53).